A 242-amino-acid polypeptide reads, in one-letter code: MTEVVPSSALSEVSLRLLCHDDIDTVKHLCGDWFPIEYPDSWYRDITSNKKFFSLAATYRGAIVGMIVAEIKNRTKIHKEDGDILASSFSVDTQVAYILSLGVVKEFRKHGIGSLLLESLKDHISTTAQDHCKAIYLHVLTTNNTAINFYENRDFRQHHYLPYYYSIRGVLKDGFTYVLYINGGHPPWTILDYIQHLGSALANLSPCSIPHRIYRQAHSLLCSFLPWSSISSKGGIEYSRTM.

Over 1–192 (MTEVVPSSAL…GGHPPWTILD (192 aa)) the chain is Cytoplasmic. Positions 13 to 182 (VSLRLLCHDD…DGFTYVLYIN (170 aa)) constitute an N-acetyltransferase domain. Tyr38 is a substrate binding site. At Lys79 the chain carries N6-acetyllysine; by autocatalysis. Tyr97 is a catalytic residue. Leu99 contacts substrate. 101–103 (LGV) provides a ligand contact to acetyl-CoA. N6-acetyllysine; by autocatalysis is present on residues Lys105, Lys109, and Lys121. An acetyl-CoA-binding site is contributed by 109–114 (KHGIGS). His138 is an active-site residue. Residues Asn143 and 150 to 153 (YENR) each bind acetyl-CoA. Residues 162–173 (PYYYSIRGVLKD) are required for homodimerization. Tyr165 is a substrate binding site. Residues 193–236 (YIQHLGSALANLSPCSIPHRIYRQAHSLLCSFLPWSSISSKGGI) constitute an intramembrane region (helical). The Cytoplasmic portion of the chain corresponds to 237 to 242 (EYSRTM).

It belongs to the acetyltransferase family. NAA60 subfamily. As to quaternary structure, monomer and homodimer; monomer in presence of substrate and homodimer in its absence. In terms of processing, acetylated: autoacetylation is required for optimal acetyltransferase activity.

Its subcellular location is the golgi apparatus membrane. It catalyses the reaction N-terminal L-methionyl-[transmembrane protein] + acetyl-CoA = N-terminal N(alpha)-acetyl-L-methionyl-[transmembrane protein] + CoA + H(+). It carries out the reaction L-lysyl-[protein] + acetyl-CoA = N(6)-acetyl-L-lysyl-[protein] + CoA + H(+). N-alpha-acetyltransferase that specifically mediates the acetylation of N-terminal residues of the transmembrane proteins, with a strong preference for N-termini facing the cytosol. Displays N-terminal acetyltransferase activity towards a range of N-terminal sequences including those starting with Met-Lys, Met-Val, Met-Ala and Met-Met. Required for normal chromosomal segregation during anaphase. May also show histone acetyltransferase activity; such results are however unclear in vivo and would require additional experimental evidences. The chain is N-alpha-acetyltransferase 60 (Naa60) from Rattus norvegicus (Rat).